The chain runs to 179 residues: Large ribosomal subunit protein uL5 (179 aa).

Belongs to the universal ribosomal protein uL5 family. Part of the 50S ribosomal subunit; part of the 5S rRNA/L5/L18/L25 subcomplex. Contacts the 5S rRNA and the P site tRNA. Forms a bridge to the 30S subunit in the 70S ribosome.

Its function is as follows. This is one of the proteins that bind and probably mediate the attachment of the 5S RNA into the large ribosomal subunit, where it forms part of the central protuberance. In the 70S ribosome it contacts protein S13 of the 30S subunit (bridge B1b), connecting the 2 subunits; this bridge is implicated in subunit movement. Contacts the P site tRNA; the 5S rRNA and some of its associated proteins might help stabilize positioning of ribosome-bound tRNAs. This Marinobacter nauticus (strain ATCC 700491 / DSM 11845 / VT8) (Marinobacter aquaeolei) protein is Large ribosomal subunit protein uL5.